We begin with the raw amino-acid sequence, 628 residues long: Phosphomethylpyrimidine synthase (628 aa).

Residues 1-14 (MTISDIGSQATTHT) show a composition bias toward polar residues. Positions 1-37 (MTISDIGSQATTHTPVKASKADALKTPAHRSETDARF) are disordered. A compositionally biased stretch (basic and acidic residues) spans 19-37 (SKADALKTPAHRSETDARF). Substrate-binding positions include asparagine 260, methionine 289, tyrosine 318, histidine 354, 374–376 (SRG), 415–418 (DGLR), and glutamate 454. Histidine 458 is a Zn(2+) binding site. Position 481 (tyrosine 481) interacts with substrate. Zn(2+) is bound at residue histidine 522. The [4Fe-4S] cluster site is built by cysteine 602, cysteine 605, and cysteine 610.

It belongs to the ThiC family. As to quaternary structure, homodimer. The cofactor is [4Fe-4S] cluster.

The catalysed reaction is 5-amino-1-(5-phospho-beta-D-ribosyl)imidazole + S-adenosyl-L-methionine = 4-amino-2-methyl-5-(phosphooxymethyl)pyrimidine + CO + 5'-deoxyadenosine + formate + L-methionine + 3 H(+). It participates in cofactor biosynthesis; thiamine diphosphate biosynthesis. Catalyzes the synthesis of the hydroxymethylpyrimidine phosphate (HMP-P) moiety of thiamine from aminoimidazole ribotide (AIR) in a radical S-adenosyl-L-methionine (SAM)-dependent reaction. This Psychrobacter cryohalolentis (strain ATCC BAA-1226 / DSM 17306 / VKM B-2378 / K5) protein is Phosphomethylpyrimidine synthase.